A 69-amino-acid polypeptide reads, in one-letter code: Brevinin-1Pb (69 aa).

The N-terminal stretch at 1 to 20 is a signal peptide; sequence MFTLNKFLLLLFFLGTINLS. Positions 21–43 are excised as a propeptide; sequence FCEEENAEEERIDEPDETDVEVE. A disulfide bridge connects residues Cys-63 and Cys-69.

As to expression, expressed by the skin glands.

The protein localises to the secreted. Its function is as follows. Antibacterial activity against Gram-positive bacterium S.aureus and Gram-negative bacterium E.coli. Has activity against C.albicans. In Lithobates pipiens (Northern leopard frog), this protein is Brevinin-1Pb.